Here is a 531-residue protein sequence, read N- to C-terminus: CTP synthase (531 aa).

The tract at residues 1-267 (MTKYIFVTGG…DQIVCEHLRL (267 aa)) is amidoligase domain. Ser13 contacts CTP. Ser13 is a binding site for UTP. 14–19 (SLGKGI) provides a ligand contact to ATP. Tyr54 is a binding site for L-glutamine. ATP is bound at residue Asp71. Residues Asp71 and Glu141 each coordinate Mg(2+). Residues 148–150 (DIE), 188–193 (KTKPTQ), and Lys224 contribute to the CTP site. Residues 188–193 (KTKPTQ) and Lys224 contribute to the UTP site. 240-242 (RDA) lines the ATP pocket. The 240-residue stretch at 292–531 (KIALVGKYVE…REFVRASLKE (240 aa)) folds into the Glutamine amidotransferase type-1 domain. Residue Gly354 coordinates L-glutamine. Cys381 acts as the Nucleophile; for glutamine hydrolysis in catalysis. Residues 382 to 385 (LGMQ), Glu405, and Arg462 each bind L-glutamine. Catalysis depends on residues His507 and Glu509.

The protein belongs to the CTP synthase family. As to quaternary structure, homotetramer.

The enzyme catalyses UTP + L-glutamine + ATP + H2O = CTP + L-glutamate + ADP + phosphate + 2 H(+). The catalysed reaction is L-glutamine + H2O = L-glutamate + NH4(+). It carries out the reaction UTP + NH4(+) + ATP = CTP + ADP + phosphate + 2 H(+). It participates in pyrimidine metabolism; CTP biosynthesis via de novo pathway; CTP from UDP: step 2/2. Allosterically activated by GTP, when glutamine is the substrate; GTP has no effect on the reaction when ammonia is the substrate. The allosteric effector GTP functions by stabilizing the protein conformation that binds the tetrahedral intermediate(s) formed during glutamine hydrolysis. Inhibited by the product CTP, via allosteric rather than competitive inhibition. Catalyzes the ATP-dependent amination of UTP to CTP with either L-glutamine or ammonia as the source of nitrogen. Regulates intracellular CTP levels through interactions with the four ribonucleotide triphosphates. In Geobacillus kaustophilus (strain HTA426), this protein is CTP synthase.